Reading from the N-terminus, the 352-residue chain is Fe(3+) ions import ATP-binding protein FbpC (352 aa).

Positions 5–239 constitute an ABC transporter domain; sequence LHIGHLSKSF…PADLDAALFI (235 aa). 37–44 contributes to the ATP binding site; sequence GASGCGKT.

The protein belongs to the ABC transporter superfamily. Fe(3+) ion importer (TC 3.A.1.10) family. As to quaternary structure, the complex is composed of two ATP-binding proteins (FbpC), two transmembrane proteins (FbpB) and a solute-binding protein (FbpA).

It localises to the cell inner membrane. The enzyme catalyses Fe(3+)(out) + ATP + H2O = Fe(3+)(in) + ADP + phosphate + H(+). Functionally, part of the ABC transporter complex FbpABC involved in Fe(3+) ions import. Responsible for energy coupling to the transport system. This is Fe(3+) ions import ATP-binding protein FbpC from Neisseria meningitidis serogroup A / serotype 4A (strain DSM 15465 / Z2491).